The chain runs to 207 residues: Large ribosomal subunit protein uL4 (207 aa).

The interval 43 to 85 (SRRQGTHDTKGRSEVRGGGRKPWKQKGTGRARQGSIRSPQWVG) is disordered. Basic and acidic residues predominate over residues 47–59 (GTHDTKGRSEVRG). Residues 60–71 (GGRKPWKQKGTG) are compositionally biased toward basic residues.

This sequence belongs to the universal ribosomal protein uL4 family. In terms of assembly, part of the 50S ribosomal subunit.

Its function is as follows. One of the primary rRNA binding proteins, this protein initially binds near the 5'-end of the 23S rRNA. It is important during the early stages of 50S assembly. It makes multiple contacts with different domains of the 23S rRNA in the assembled 50S subunit and ribosome. In terms of biological role, forms part of the polypeptide exit tunnel. The chain is Large ribosomal subunit protein uL4 from Exiguobacterium sibiricum (strain DSM 17290 / CCUG 55495 / CIP 109462 / JCM 13490 / 255-15).